The sequence spans 181 residues: Protein Syd (181 aa).

Belongs to the Syd family.

It is found in the cell inner membrane. In terms of biological role, interacts with the SecY protein in vivo. May bind preferentially to an uncomplexed state of SecY, thus functioning either as a chelating agent for excess SecY in the cell or as a regulatory factor that negatively controls the translocase function. This is Protein Syd from Klebsiella pneumoniae (strain 342).